A 185-amino-acid chain; its full sequence is NEDD8-conjugating enzyme UBE2F (185 aa).

The segment at M1–R29 is disordered. The segment at M1–R29 is interaction with uba3. Residues V32–R185 form the UBC core domain. Residue C116 is the Glycyl thioester intermediate of the active site.

It belongs to the ubiquitin-conjugating enzyme family. UBE2F subfamily.

It catalyses the reaction [E1 NEDD8-activating enzyme]-S-[NEDD8 protein]-yl-L-cysteine + [E2 NEDD8-conjugating enzyme]-L-cysteine = [E1 NEDD8-activating enzyme]-L-cysteine + [E2 NEDD8-conjugating enzyme]-S-[NEDD8-protein]-yl-L-cysteine.. It functions in the pathway protein modification; protein neddylation. Its function is as follows. Accepts the ubiquitin-like protein NEDD8 from the UBA3-NAE1 E1 complex and catalyzes its covalent attachment to other proteins. Together with the E3 ubiquitin ligase rnf7/rbx2, specifically neddylates cullin-5 (cul5). Does not neddylate cul1, cul2, cul3, cul4a or cul4b. This is NEDD8-conjugating enzyme UBE2F (ube2f) from Xenopus tropicalis (Western clawed frog).